The sequence spans 348 residues: D-alanine--D-alanine ligase (348 aa).

One can recognise an ATP-grasp domain in the interval 132–334 (KRVLESAGIP…YAELIEELVR (203 aa)). Residue 162 to 217 (EAVLSYPVFVKPANMGSSVGISKAESEEELRAAILLALTYDSRILIEQGVLAREIE) coordinates ATP. Asp-288, Glu-301, and Asn-303 together coordinate Mg(2+).

It belongs to the D-alanine--D-alanine ligase family. Requires Mg(2+) as cofactor. It depends on Mn(2+) as a cofactor.

The protein localises to the cytoplasm. It carries out the reaction 2 D-alanine + ATP = D-alanyl-D-alanine + ADP + phosphate + H(+). The protein operates within cell wall biogenesis; peptidoglycan biosynthesis. In terms of biological role, cell wall formation. The sequence is that of D-alanine--D-alanine ligase from Streptococcus equi subsp. equi (strain 4047).